The chain runs to 122 residues: MCCYVGKATKIFLCLAAALIVVGLVLGFGLAHRTWGERKVQPDCRWPDCQLQPAYGGGGGGGDPLPATSGAGDTPPGVPLTEPAVAAFPGVASASSAAPPTASMPYLGPPSPFAVGLAPAHG.

An N-terminal signal peptide occupies residues 1-35 (MCCYVGKATKIFLCLAAALIVVGLVLGFGLAHRTW). Residues 55 to 83 (YGGGGGGGDPLPATSGAGDTPPGVPLTEP) form a disordered region.

This is an uncharacterized protein from Oryza sativa subsp. japonica (Rice).